The following is a 591-amino-acid chain: MQTSPLPRRTKIVATIGPATQSKEVLRQLIQAGATTFRLNFSHGDHAYHQQSIRLIRQIAFELNQPVGILQDLQGPKIRVGKFLNDAGSVQLKNGDPYTLTSRPVECTETISSISYEYLADEVPSGARILLDDGKLEMLVEEVDTVARDLHCRVIVGGTLSSNKGVNFPGVCLSVKAMTDKDKEDLMFGLDQGVDWVALSFVRNPQDIDEIKGLIAAAGKSVPVIAKIEKHEAIKDMQAVLEKCDGVMVARGDLGVELPAEDVPILQKKLIATANRLGIPVITATQMLDSMVNSPRPTRAEVSDVANAILDGTDAVMLSNETAIGKFPVEAVAIMAKIAERIEQEDINPSQAEASRTSIPNAISSAVSQIAETLNAAAIMSLTKTGSTARHVSKFRPKTPILAVTPHVDVSRQLQLVWGVKPLLVLDLPSTSQTFQAAINVAQENHFLRDGDLVVMTAGTLQGVAGSTDLIKVEVVKAILGRGVGIGQGAVSGRARVASRPQAIAQFTQGEILVVPSTNADCVDMMRRAAGIITEEESLTSHAAIIGLRLGVPVIVGFKGATQKIRDGAIVTIDAQKGLIYSGALPPVSKG.

Arginine 38 is a binding site for substrate. K(+) is bound by residues asparagine 40, serine 42, and aspartate 72. 40-43 lines the ATP pocket; sequence NFSH. ATP contacts are provided by arginine 79 and lysine 164. Glutamate 229 provides a ligand contact to Mg(2+). Residues glycine 252, aspartate 253, and threonine 285 each coordinate substrate. Aspartate 253 contacts Mg(2+).

It belongs to the pyruvate kinase family. In the C-terminal section; belongs to the PEP-utilizing enzyme family. Homotetramer. Mg(2+) is required as a cofactor. K(+) serves as cofactor.

The catalysed reaction is pyruvate + ATP = phosphoenolpyruvate + ADP + H(+). It functions in the pathway carbohydrate degradation; glycolysis; pyruvate from D-glyceraldehyde 3-phosphate: step 5/5. The chain is Pyruvate kinase 2 (pyk2) from Synechocystis sp. (strain ATCC 27184 / PCC 6803 / Kazusa).